Reading from the N-terminus, the 330-residue chain is Serpentine receptor class J-38 (330 aa).

A run of 7 helical transmembrane segments spans residues 6–26 (IYIF…PIFV), 43–63 (LLLF…VVPI), 98–118 (LVAS…LVIY), 135–155 (LLLS…LGYA), 200–220 (TIIW…LALL), 253–273 (IPIV…IFGI), and 285–305 (GALG…LPIF).

It belongs to the nematode receptor-like protein srj family.

Its subcellular location is the membrane. In Caenorhabditis elegans, this protein is Serpentine receptor class J-38 (srj-38).